We begin with the raw amino-acid sequence, 137 residues long: MSKKVENLMLGSWLTALTAMLGSLYFSEIRMYEPCTLCWYQRIIMYPLVLILFIGYLKRDVNVALYSLWFSLIGMFTSLYHYSIQKLPFLTDAAPACGRVPCTGQYINWFGFVTIPFLAFTAFVIIFICSLLIIREK.

Residues 6–25 traverse the membrane as a helical segment; it reads ENLMLGSWLTALTAMLGSLY. Residues cysteine 35 and cysteine 38 are joined by a disulfide bond. Transmembrane regions (helical) follow at residues 40–59 and 66–83; these read YQRI…YLKR and YSLW…YHYS. Residues cysteine 97 and cysteine 102 are joined by a disulfide bond. Residues 111–133 traverse the membrane as a helical segment; that stretch reads GFVTIPFLAFTAFVIIFICSLLI.

This sequence belongs to the DsbB family. BdbC subfamily.

The protein resides in the cell membrane. Its function is as follows. Required for disulfide bond formation in some proteins. The polypeptide is Probable disulfide formation protein C (Halalkalibacterium halodurans (strain ATCC BAA-125 / DSM 18197 / FERM 7344 / JCM 9153 / C-125) (Bacillus halodurans)).